Here is a 712-residue protein sequence, read N- to C-terminus: Probable metal-nicotianamine transporter YSL11 (712 aa).

Residues 25–48 are disordered; it reads RRNTTAAARGNAGEEEEEAEAVAP. Helical transmembrane passes span 70–90, 93–113, 138–158, 180–200, 242–262, 300–320, 345–365, 418–438, 446–466, 478–498, 532–552, 593–613, 631–651, and 666–686; these read AFVVGFLLSIMFNIIVMKLSL, GVIPSLNVSASLLGFFLVRLW, CVVSAYGVAFSGGFGSYLFGM, LGWIIGFMFLVSFVGLFALVP, LGKYFSISFLWAFFQWFYTAG, IVNVSLLIGGIISWGIMWPLI, VFITIAVILGDGLYNFVKVFG, VAIGGYVVLAVITSGCLPLII, ILIAYIFAPIMAFCNAYGSGL, LAIFVFGAWAGASHGGVLVGL, FVSQVIGTAMGCVIAPCVFWL, LTLCYIAFVAAFIINLIKDLV, FYLGPYFAIDMFMGSVILYFW, and VASGLMCGDGLWALPQAVLSL.

This sequence belongs to the YSL (TC 2.A.67.2) family.

The protein resides in the membrane. Functionally, may be involved in the transport of nicotianamine-chelated metals. The polypeptide is Probable metal-nicotianamine transporter YSL11 (YSL11) (Oryza sativa subsp. japonica (Rice)).